Consider the following 424-residue polypeptide: Double homeobox protein 4-like protein 2 (424 aa).

Over residues Met1–Thr10 the composition is skewed to polar residues. Disordered stretches follow at residues Met1 to Leu24, Ser72 to Thr102, Arg148 to Ala167, Leu218 to Pro362, and Gln388 to Glu414. 2 consecutive DNA-binding regions (homeobox) follow at residues Gly19–His78 and Gly94–Gly153. A compositionally biased stretch (basic and acidic residues) spans Lys265–Arg274. 2 stretches are compositionally biased toward low complexity: residues Pro278–Pro302 and Ala319–Ala329.

The protein localises to the nucleus. Functionally, may be involved in transcriptional regulation. The chain is Double homeobox protein 4-like protein 2 (DUX4L2) from Homo sapiens (Human).